A 242-amino-acid chain; its full sequence is 1-(5-phosphoribosyl)-5-[(5-phosphoribosylamino)methylideneamino] imidazole-4-carboxamide isomerase (242 aa).

D10 acts as the Proton acceptor in catalysis. The active-site Proton donor is the D132.

The protein belongs to the HisA/HisF family.

It localises to the cytoplasm. It catalyses the reaction 1-(5-phospho-beta-D-ribosyl)-5-[(5-phospho-beta-D-ribosylamino)methylideneamino]imidazole-4-carboxamide = 5-[(5-phospho-1-deoxy-D-ribulos-1-ylimino)methylamino]-1-(5-phospho-beta-D-ribosyl)imidazole-4-carboxamide. It participates in amino-acid biosynthesis; L-histidine biosynthesis; L-histidine from 5-phospho-alpha-D-ribose 1-diphosphate: step 4/9. The sequence is that of 1-(5-phosphoribosyl)-5-[(5-phosphoribosylamino)methylideneamino] imidazole-4-carboxamide isomerase from Methanothrix thermoacetophila (strain DSM 6194 / JCM 14653 / NBRC 101360 / PT) (Methanosaeta thermophila).